The primary structure comprises 184 residues: MSWRSESIWIEFIVGSRKTSNFCWAFILFFGSLGFLLVGTSSYLGRNLISLFPSQQIVFFPQGIVMSFYGIAGLFISSYLWCTIFWNVGSGYDRFDRKEGIVCIFRWGFPGKNRRIFLRFLMKDIQSIRIEVKEGIYARRVLYMEIRGQGAVPLTRTDENLTPREIEQKAAELAYFLRVPIEVF.

Transmembrane regions (helical) follow at residues 22–42 (FCWA…GTSS) and 57–77 (IVFF…LFIS).

It belongs to the Ycf4 family.

It is found in the plastid. The protein localises to the chloroplast thylakoid membrane. Seems to be required for the assembly of the photosystem I complex. In Gossypium barbadense (Sea Island cotton), this protein is Photosystem I assembly protein Ycf4.